Consider the following 261-residue polypeptide: NAD-capped RNA hydrolase NudC (261 aa).

Substrate is bound at residue R69. Zn(2+) is bound by residues C98 and C101. E111 contributes to the substrate binding site. Zn(2+) contacts are provided by C116 and C119. Y124 contacts substrate. A Nudix hydrolase domain is found at 125-248; it reads PQIAPCIIVA…TVARRLIEDT (124 aa). The a divalent metal cation site is built by A158, E174, and E178. The Nudix box signature appears at 159–180; the sequence is GFVEVGETLEQTVAREVMEESS. 192–199 contributes to the substrate binding site; it reads QPWPFPQS. E219 serves as a coordination point for a divalent metal cation. Position 241 (A241) interacts with substrate.

It belongs to the Nudix hydrolase family. NudC subfamily. Homodimer. Mg(2+) serves as cofactor. Mn(2+) is required as a cofactor. The cofactor is Zn(2+).

It catalyses the reaction a 5'-end NAD(+)-phospho-ribonucleoside in mRNA + H2O = a 5'-end phospho-adenosine-phospho-ribonucleoside in mRNA + beta-nicotinamide D-ribonucleotide + 2 H(+). The catalysed reaction is NAD(+) + H2O = beta-nicotinamide D-ribonucleotide + AMP + 2 H(+). The enzyme catalyses NADH + H2O = reduced beta-nicotinamide D-ribonucleotide + AMP + 2 H(+). MRNA decapping enzyme that specifically removes the nicotinamide adenine dinucleotide (NAD) cap from a subset of mRNAs by hydrolyzing the diphosphate linkage to produce nicotinamide mononucleotide (NMN) and 5' monophosphate mRNA. The NAD-cap is present at the 5'-end of some mRNAs and stabilizes RNA against 5'-processing. Has preference for mRNAs with a 5'-end purine. Catalyzes the hydrolysis of a broad range of dinucleotide pyrophosphates. The sequence is that of NAD-capped RNA hydrolase NudC from Erwinia tasmaniensis (strain DSM 17950 / CFBP 7177 / CIP 109463 / NCPPB 4357 / Et1/99).